The chain runs to 151 residues: Thymosin beta (151 aa).

Tandem repeats lie at residues 24–29 (LKKVET), 62–67 (LHSTPV), 100–105 (LKKTET), and 134–139 (LHHVET). Residues 24–139 (LKKVETTEKN…DKSALHHVET (116 aa)) are 4 X 6 AA repeat of L-[KH]-[KSH]-[VT]-[EP]-[TV].

It belongs to the thymosin beta family. As to quaternary structure, interacts (via repeats 1, 2 and 4) with G-actin in a 1:3 ratio. Interacts (via repeats 2 and 3) with F-actin. At the comma stage, enriched in the developing nerve ring (at protein level). Ubiquitously expressed in larvae and adults with enrichment in the spermatheca, the intestinal tract and the posterior bulb of the pharynx (at protein level). Expressed in oocytes and in the gonad (at protein level).

It localises to the cytoplasm. It is found in the cell cortex. The protein resides in the cell junction. The protein localises to the cytoskeleton. In terms of biological role, plays an important role in the organization of the cytoskeleton by regulating actin polymerization in two ways. Firstly, by binding to and sequestering actin monomers (G actin) inhibits actin polymerization. Secondly, by binding directly filamentous actin (F actin) promotes actin polymerization. Regulates the formation of cortical actin in oocytes conferring them enough rigidity to sustain the contractions during ovulation. This Caenorhabditis elegans protein is Thymosin beta.